A 243-amino-acid polypeptide reads, in one-letter code: Benzil reductase ((S)-benzoin forming) (243 aa).

Residues isoleucine 6, asparagine 80, tyrosine 147, lysine 151, and threonine 184 each contribute to the NADP(+) site. The active-site Proton acceptor is tyrosine 147.

The protein belongs to the short-chain dehydrogenases/reductases (SDR) family.

It is found in the cytoplasm. It carries out the reaction (S)-benzoin + NADP(+) = benzil + NADPH + H(+). Its function is as follows. Reduces benzil stereospecifically to (S)-benzoin. In Bacillus subtilis (strain 168), this protein is Benzil reductase ((S)-benzoin forming) (yueD).